A 704-amino-acid polypeptide reads, in one-letter code: Elongation factor G (704 aa).

The 284-residue stretch at D8–L291 folds into the tr-type G domain. GTP is bound by residues A17–T24, D90–H94, and N144–D147.

Belongs to the TRAFAC class translation factor GTPase superfamily. Classic translation factor GTPase family. EF-G/EF-2 subfamily.

It is found in the cytoplasm. Functionally, catalyzes the GTP-dependent ribosomal translocation step during translation elongation. During this step, the ribosome changes from the pre-translocational (PRE) to the post-translocational (POST) state as the newly formed A-site-bound peptidyl-tRNA and P-site-bound deacylated tRNA move to the P and E sites, respectively. Catalyzes the coordinated movement of the two tRNA molecules, the mRNA and conformational changes in the ribosome. The chain is Elongation factor G from Chlorobium phaeovibrioides (strain DSM 265 / 1930) (Prosthecochloris vibrioformis (strain DSM 265)).